The following is a 204-amino-acid chain: Arginine exporter protein ArgO (204 aa).

The next 6 helical transmembrane spans lie at 1 to 21, 37 to 57, 67 to 87, 111 to 131, 154 to 174, and 179 to 199; these read MWAV…PLGP, LMVA…GIFG, LLLG…GWGA, IIAT…DTFV, TASF…APWL, and VQRV…LQLA.

This sequence belongs to the LysE/ArgO transporter (TC 2.A.75) family.

It localises to the cell inner membrane. The catalysed reaction is L-arginine(in) = L-arginine(out). Its function is as follows. Involved in the export of arginine. Important to control the intracellular level of arginine and the correct balance between arginine and lysine. The sequence is that of Arginine exporter protein ArgO from Pectobacterium atrosepticum (strain SCRI 1043 / ATCC BAA-672) (Erwinia carotovora subsp. atroseptica).